Consider the following 323-residue polypeptide: Phospho-N-acetylmuramoyl-pentapeptide-transferase (323 aa).

A run of 9 helical transmembrane segments spans residues 3–23 (NILL…PALI), 52–72 (MGGL…SWVL), 77–97 (MLPT…LGMW), 121–141 (IVGA…MALH), 145–165 (IGNW…LVGF), 175–195 (LDGL…IVAW), 200–220 (INIA…LIFN), 226–248 (IFMG…ILLH), and 301–321 (IDLT…WVIL).

It belongs to the glycosyltransferase 4 family. MraY subfamily. It depends on Mg(2+) as a cofactor.

It is found in the cell membrane. It carries out the reaction UDP-N-acetyl-alpha-D-muramoyl-L-alanyl-gamma-D-glutamyl-L-lysyl-D-alanyl-D-alanine + di-trans,octa-cis-undecaprenyl phosphate = Mur2Ac(oyl-L-Ala-gamma-D-Glu-L-Lys-D-Ala-D-Ala)-di-trans,octa-cis-undecaprenyl diphosphate + UMP. Its pathway is cell wall biogenesis; peptidoglycan biosynthesis. Functionally, catalyzes the initial step of the lipid cycle reactions in the biosynthesis of the cell wall peptidoglycan: transfers peptidoglycan precursor phospho-MurNAc-pentapeptide from UDP-MurNAc-pentapeptide onto the lipid carrier undecaprenyl phosphate, yielding undecaprenyl-pyrophosphoryl-MurNAc-pentapeptide, known as lipid I. The chain is Phospho-N-acetylmuramoyl-pentapeptide-transferase from Levilactobacillus brevis (strain ATCC 367 / BCRC 12310 / CIP 105137 / JCM 1170 / LMG 11437 / NCIMB 947 / NCTC 947) (Lactobacillus brevis).